A 459-amino-acid chain; its full sequence is Bifunctional protein GlmU (459 aa).

Positions 1-230 are pyrophosphorylase; that stretch reads MSNRFAVILA…FDETLGVNDR (230 aa). Residues 9-12, Lys-23, Gln-73, and 78-79 contribute to the UDP-N-acetyl-alpha-D-glucosamine site; these read LAAG and GT. Mg(2+) is bound at residue Asp-103. Residues Gly-140, Glu-155, Asn-170, and Asn-228 each contribute to the UDP-N-acetyl-alpha-D-glucosamine site. Asn-228 serves as a coordination point for Mg(2+). The interval 231-251 is linker; the sequence is VALSQAEIIMKNRINRKNMVN. Residues 252-459 form an N-acetyltransferase region; the sequence is GVTIIDPSNT…VDQLLNKKKS (208 aa). UDP-N-acetyl-alpha-D-glucosamine contacts are provided by Arg-333 and Lys-351. The active-site Proton acceptor is His-363. UDP-N-acetyl-alpha-D-glucosamine-binding residues include Tyr-366 and Asn-377. Acetyl-CoA is bound by residues 386–387, Ala-423, and Arg-440; that span reads NY.

It in the N-terminal section; belongs to the N-acetylglucosamine-1-phosphate uridyltransferase family. In the C-terminal section; belongs to the transferase hexapeptide repeat family. Homotrimer. Mg(2+) is required as a cofactor.

It is found in the cytoplasm. The enzyme catalyses alpha-D-glucosamine 1-phosphate + acetyl-CoA = N-acetyl-alpha-D-glucosamine 1-phosphate + CoA + H(+). The catalysed reaction is N-acetyl-alpha-D-glucosamine 1-phosphate + UTP + H(+) = UDP-N-acetyl-alpha-D-glucosamine + diphosphate. The protein operates within nucleotide-sugar biosynthesis; UDP-N-acetyl-alpha-D-glucosamine biosynthesis; N-acetyl-alpha-D-glucosamine 1-phosphate from alpha-D-glucosamine 6-phosphate (route II): step 2/2. Its pathway is nucleotide-sugar biosynthesis; UDP-N-acetyl-alpha-D-glucosamine biosynthesis; UDP-N-acetyl-alpha-D-glucosamine from N-acetyl-alpha-D-glucosamine 1-phosphate: step 1/1. It functions in the pathway bacterial outer membrane biogenesis; LPS lipid A biosynthesis. Its function is as follows. Catalyzes the last two sequential reactions in the de novo biosynthetic pathway for UDP-N-acetylglucosamine (UDP-GlcNAc). The C-terminal domain catalyzes the transfer of acetyl group from acetyl coenzyme A to glucosamine-1-phosphate (GlcN-1-P) to produce N-acetylglucosamine-1-phosphate (GlcNAc-1-P), which is converted into UDP-GlcNAc by the transfer of uridine 5-monophosphate (from uridine 5-triphosphate), a reaction catalyzed by the N-terminal domain. The sequence is that of Bifunctional protein GlmU from Bacillus cereus (strain AH187).